Here is a 1190-residue protein sequence, read N- to C-terminus: Phosphatidylinositol 3,4,5-trisphosphate 5-phosphatase 1 (1190 aa).

Positions 8-104 (WNHGNITRSK…GLVTHLQFPV (97 aa)) constitute an SH2 domain. Positions 111–120 (AIDEPEEDTE) are enriched in acidic residues. The disordered stretch occupies residues 111–130 (AIDEPEEDTESVMSPPELPP). Residues 126-131 (PELPPR) carry the SH3-binding 1 motif. Ser-245 carries the phosphoserine modification. An NPXY motif 1 motif is present at residues 914 to 917 (NPNY). Position 917 is a phosphotyrosine (Tyr-917). Ser-934 is modified (phosphoserine). Tyr-944 is modified (phosphotyrosine). Residues 946–1190 (QLPKDSSLGP…ESLLGRTAMQ (245 aa)) are disordered. Positions 961–971 (PPTPPSQPPLS) are enriched in pro residues. A Phosphothreonine modification is found at Thr-963. A phosphoserine mark is found at Ser-966 and Ser-971. The short motif at 969–974 (PLSPKK) is the SH3-binding 2 element. Basic and acidic residues predominate over residues 989–998 (QETRPGDLGK). An interaction with DAB2 region spans residues 1014-1028 (MFENPLYGSVSPFPK). An NPXY motif 2 motif is present at residues 1017–1020 (NPLY). Residue Tyr-1020 is modified to Phosphotyrosine. A compositionally biased stretch (basic and acidic residues) spans 1031-1045 (PRKEQESPKMMRKEP). An SH3-binding 3 motif is present at residues 1038 to 1049 (PKMMRKEPPPCP). The segment covering 1140 to 1149 (IPAPRPPLPV) has biased composition (pro residues). The segment covering 1161–1183 (KGRDYRDNTELPHHGKHRQEESL) has biased composition (basic and acidic residues).

This sequence belongs to the inositol 1,4,5-trisphosphate 5-phosphatase family. As to quaternary structure, interacts with tyrosine phosphorylated forms of SHC1. Interacts with tyrosine phosphorylated form of DOK1. Interacts with tyrosine phosphorylated form of DOK3. Interacts with tyrosine phosphorylated form of SLAMF1/CD150. Interacts with PTPN11/SHP-2 in response to IL-3. Interacts with receptor EPOR. Interacts with receptors MS4A2/FCER1B and FCER1G. Interacts with receptors FCGR2B and FCGR3. Interacts with receptor FCGR2A, leading to regulate gene expression during the phagocytic process. Interacts with GRB2. Interacts with PLCG1. Interacts with tyrosine kinases SRC and TEC. Interacts with c-Met/MET. Interacts with MILR1 (tyrosine-phosphorylated). Can weakly interact (via NPXY motif 2) with DAB2 (via PID domain); the interaction is impaired by tyrosine phosphorylation of the NPXY motif. Interacts (via SH2 domain) with tyrosine phosphorylated KLRC1 (via ITIM). Interacts with MPL/TPOR. Post-translationally, tyrosine phosphorylated by the members of the SRC family after exposure to a diverse array of extracellular stimuli such as cytokines, growth factors, antibodies, chemokines, integrin ligands and hypertonic and oxidative stress. Phosphorylated upon IgG receptor FCGR2B-binding.

The protein resides in the cytoplasm. It localises to the cell membrane. It is found in the membrane raft. Its subcellular location is the cytoskeleton. The catalysed reaction is a 1,2-diacyl-sn-glycero-3-phospho-(1D-myo-inositol-3,4,5-trisphosphate) + H2O = a 1,2-diacyl-sn-glycero-3-phospho-(1D-myo-inositol-3,4-bisphosphate) + phosphate. It carries out the reaction 1D-myo-inositol 1,3,4,5-tetrakisphosphate + H2O = 1D-myo-inositol 1,3,4-trisphosphate + phosphate. It catalyses the reaction a 1,2-diacyl-sn-glycero-3-phospho-(1D-myo-inositol-4,5-bisphosphate) + H2O = a 1,2-diacyl-sn-glycero-3-phospho-(1D-myo-inositol 4-phosphate) + phosphate. Activated upon translocation to the sites of synthesis of PtdIns(3,4,5)P3 in the membrane. Functionally, phosphatidylinositol (PtdIns) phosphatase that specifically hydrolyzes the 5-phosphate of phosphatidylinositol-3,4,5-trisphosphate (PtdIns(3,4,5)P3) to produce PtdIns(3,4)P2, thereby negatively regulating the PI3K (phosphoinositide 3-kinase) pathways. Also able to hydrolyze the 5-phosphate of phosphatidylinositol-4,5-bisphosphate (PtdIns(4,5)P3) and inositol 1,3,4,5-tetrakisphosphate. Acts as a negative regulator of B-cell antigen receptor signaling. Mediates signaling from the FC-gamma-RIIB receptor (FCGR2B), playing a central role in terminating signal transduction from activating immune/hematopoietic cell receptor systems. Acts as a negative regulator of myeloid cell proliferation/survival and chemotaxis, mast cell degranulation, immune cells homeostasis, integrin alpha-IIb/beta-3 signaling in platelets and JNK signaling in B-cells. Regulates proliferation of osteoclast precursors, macrophage programming, phagocytosis and activation and is required for endotoxin tolerance. Involved in the control of cell-cell junctions, CD32a signaling in neutrophils and modulation of EGF-induced phospholipase C activity. Key regulator of neutrophil migration, by governing the formation of the leading edge and polarization required for chemotaxis. Modulates FCGR3/CD16-mediated cytotoxicity in NK cells. Mediates the activin/TGF-beta-induced apoptosis through its Smad-dependent expression. The polypeptide is Phosphatidylinositol 3,4,5-trisphosphate 5-phosphatase 1 (Inpp5d) (Rattus norvegicus (Rat)).